Consider the following 102-residue polypeptide: Small ribosomal subunit protein uS10 (102 aa).

The protein belongs to the universal ribosomal protein uS10 family. Part of the 30S ribosomal subunit.

Involved in the binding of tRNA to the ribosomes. The polypeptide is Small ribosomal subunit protein uS10 (Methanococcus maripaludis (strain C7 / ATCC BAA-1331)).